Reading from the N-terminus, the 344-residue chain is Phosphate acyltransferase (344 aa).

The protein belongs to the PlsX family. In terms of assembly, homodimer. Probably interacts with PlsY.

The protein resides in the cytoplasm. The catalysed reaction is a fatty acyl-[ACP] + phosphate = an acyl phosphate + holo-[ACP]. It functions in the pathway lipid metabolism; phospholipid metabolism. Functionally, catalyzes the reversible formation of acyl-phosphate (acyl-PO(4)) from acyl-[acyl-carrier-protein] (acyl-ACP). This enzyme utilizes acyl-ACP as fatty acyl donor, but not acyl-CoA. The sequence is that of Phosphate acyltransferase from Erwinia tasmaniensis (strain DSM 17950 / CFBP 7177 / CIP 109463 / NCPPB 4357 / Et1/99).